Reading from the N-terminus, the 548-residue chain is Chaperonin GroEL 2 (548 aa).

ATP is bound by residues 30-33 (TLGP), Lys-51, 87-91 (DGTTT), Gly-415, and Asp-496. The segment at 529 to 548 (KDAMPSPDMGGMGGMGGMGF) is disordered. Gly residues predominate over residues 538–548 (GGMGGMGGMGF).

This sequence belongs to the chaperonin (HSP60) family. As to quaternary structure, forms a cylinder of 14 subunits composed of two heptameric rings stacked back-to-back. Interacts with the co-chaperonin GroES.

It localises to the cytoplasm. It carries out the reaction ATP + H2O + a folded polypeptide = ADP + phosphate + an unfolded polypeptide.. In terms of biological role, together with its co-chaperonin GroES, plays an essential role in assisting protein folding. The GroEL-GroES system forms a nano-cage that allows encapsulation of the non-native substrate proteins and provides a physical environment optimized to promote and accelerate protein folding. This is Chaperonin GroEL 2 from Rhodospirillum rubrum (strain ATCC 11170 / ATH 1.1.1 / DSM 467 / LMG 4362 / NCIMB 8255 / S1).